Here is a 407-residue protein sequence, read N- to C-terminus: F-box protein SKIP23 (407 aa).

The F-box domain occupies 2–50 (VDWSTLPKDLLDLISKSLESSFDLIQFRSVCSSWRSAAEPKSPLPTHHL).

Part of a SCF (ASK-cullin-F-box) protein ligase complex. Interacts with SKP1A/ASK1.

The protein resides in the nucleus. It functions in the pathway protein modification; protein ubiquitination. Its function is as follows. Component of SCF(ASK-cullin-F-box) E3 ubiquitin ligase complexes, which may mediate the ubiquitination and subsequent proteasomal degradation of target proteins. The sequence is that of F-box protein SKIP23 (SKIP23) from Arabidopsis thaliana (Mouse-ear cress).